We begin with the raw amino-acid sequence, 410 residues long: Multifunctional CCA protein (410 aa).

Gly8 and Arg11 together coordinate ATP. The CTP site is built by Gly8 and Arg11. The Mg(2+) site is built by Asp21 and Asp23. ATP contacts are provided by Arg91, Arg137, and Arg140. Arg91, Arg137, and Arg140 together coordinate CTP. An HD domain is found at 225–326 (SGIHTLMTLQ…LNVLKKTDAF (102 aa)).

Belongs to the tRNA nucleotidyltransferase/poly(A) polymerase family. Bacterial CCA-adding enzyme type 1 subfamily. As to quaternary structure, monomer. Can also form homodimers and oligomers. Requires Mg(2+) as cofactor. Ni(2+) serves as cofactor.

The enzyme catalyses a tRNA precursor + 2 CTP + ATP = a tRNA with a 3' CCA end + 3 diphosphate. It carries out the reaction a tRNA with a 3' CCA end + 2 CTP + ATP = a tRNA with a 3' CCACCA end + 3 diphosphate. Functionally, catalyzes the addition and repair of the essential 3'-terminal CCA sequence in tRNAs without using a nucleic acid template. Adds these three nucleotides in the order of C, C, and A to the tRNA nucleotide-73, using CTP and ATP as substrates and producing inorganic pyrophosphate. tRNA 3'-terminal CCA addition is required both for tRNA processing and repair. Also involved in tRNA surveillance by mediating tandem CCA addition to generate a CCACCA at the 3' terminus of unstable tRNAs. While stable tRNAs receive only 3'-terminal CCA, unstable tRNAs are marked with CCACCA and rapidly degraded. The chain is Multifunctional CCA protein from Neisseria gonorrhoeae (strain NCCP11945).